A 462-amino-acid polypeptide reads, in one-letter code: Argininosuccinate lyase (462 aa).

The protein belongs to the lyase 1 family. Argininosuccinate lyase subfamily.

The protein localises to the cytoplasm. It carries out the reaction 2-(N(omega)-L-arginino)succinate = fumarate + L-arginine. The protein operates within amino-acid biosynthesis; L-arginine biosynthesis; L-arginine from L-ornithine and carbamoyl phosphate: step 3/3. The polypeptide is Argininosuccinate lyase (Streptococcus agalactiae serotype Ia (strain ATCC 27591 / A909 / CDC SS700)).